Here is a 37-residue protein sequence, read N- to C-terminus: Potassium channel toxin alpha-KTx 1.11 (37 aa).

3 cysteine pairs are disulfide-bonded: Cys7–Cys28, Cys13–Cys33, and Cys17–Cys35.

This sequence belongs to the short scorpion toxin superfamily. Potassium channel inhibitor family. Alpha-KTx 01 subfamily. In terms of tissue distribution, expressed by the venom gland.

The protein localises to the secreted. In terms of biological role, reversibly blocks the high conductance calcium-activated potassium channels composed of only alpha subunits (KCa1.1/KCNMA1). Unreversibly blocks the high conductance calcium-activated potassium channels composed of alpha and beta1 subunits (KCNMA1 and KCNMB1). Unreversibly and weakly blocks the high conductance calcium-activated potassium channels composed of alpha and beta4 (KCNMA1 and KCNMB4). This is Potassium channel toxin alpha-KTx 1.11 from Centruroides noxius (Mexican scorpion).